The primary structure comprises 415 residues: Lipid II:glycine glycyltransferase (415 aa).

The protein belongs to the FemABX family.

Its subcellular location is the cytoplasm. The enzyme catalyses beta-D-GlcNAc-(1-&gt;4)-Mur2Ac(oyl-L-Ala-D-isoglutaminyl-L-Lys-D-Ala-D-Ala)-di-trans,octa-cis-undecaprenyl diphosphate + glycyl-tRNA(Gly) = beta-D-GlcNAc-(1-&gt;4)-Mur2Ac(oyl-L-Ala-D-isoglutaminyl-L-Lys-(N(6)-Gly)-D-Ala-D-Ala)-di-trans,octa-cis-undecaprenyl diphosphate + tRNA(Gly) + H(+). Catalyzes the incorporation of amino acid(s) into the interchain peptide bridge of peptidoglycan, using aminoacyl-tRNA as amino acid donor. The polypeptide is Lipid II:glycine glycyltransferase (femX) (Staphylococcus saprophyticus subsp. saprophyticus (strain ATCC 15305 / DSM 20229 / NCIMB 8711 / NCTC 7292 / S-41)).